The primary structure comprises 429 residues: Probable electron transfer flavoprotein-quinone oxidoreductase YdiS (429 aa).

8–22 serves as a coordination point for FAD; it reads AIVVGAGVAGSVAAL.

Belongs to the ETF-QO/FixC family. The cofactor is FAD.

Probably accepts electrons from YdiQ/YdiR and reduces a quinone. In Escherichia coli (strain K12), this protein is Probable electron transfer flavoprotein-quinone oxidoreductase YdiS (ydiS).